We begin with the raw amino-acid sequence, 351 residues long: Ceramide hydroxylase (351 aa).

4 helical membrane passes run 26 to 46, 47 to 67, 141 to 161, and 204 to 224; these read AAIY…GFLI, AATT…MLAL, GFLF…AILI, and VACW…VVPV.

Belongs to the fatty acid desaturase type 1 family.

It localises to the cell inner membrane. Its pathway is lipid metabolism; sphingolipid metabolism. Its function is as follows. Involved in de novo bacterial ceramide synthesis. In Caulobacter vibrioides (strain NA1000 / CB15N) (Caulobacter crescentus), this protein is Ceramide hydroxylase.